The following is a 664-amino-acid chain: Methionine--tRNA ligase (664 aa).

A 'HIGH' region motif is present at residues 15 to 25 (YYPSGKLHIGH). The 'KMSKS' region signature appears at 311-315 (KMSKS). Lysine 314 contributes to the ATP binding site. Residues 536 to 556 (MQGSAPAKEETKEEEPQEVDR) form a disordered region. In terms of domain architecture, tRNA-binding spans 570–662 (LRVAEVIEAE…IDQSLPKGTR (93 aa)).

The protein belongs to the class-I aminoacyl-tRNA synthetase family. MetG type 2B subfamily. As to quaternary structure, homodimer.

It localises to the cytoplasm. It carries out the reaction tRNA(Met) + L-methionine + ATP = L-methionyl-tRNA(Met) + AMP + diphosphate. Functionally, is required not only for elongation of protein synthesis but also for the initiation of all mRNA translation through initiator tRNA(fMet) aminoacylation. The sequence is that of Methionine--tRNA ligase (metG) from Bacillus subtilis (strain 168).